The sequence spans 232 residues: Putative N-acetylmannosamine-6-phosphate 2-epimerase (232 aa).

The protein belongs to the NanE family.

It carries out the reaction an N-acyl-D-glucosamine 6-phosphate = an N-acyl-D-mannosamine 6-phosphate. It participates in amino-sugar metabolism; N-acetylneuraminate degradation; D-fructose 6-phosphate from N-acetylneuraminate: step 3/5. Its function is as follows. Converts N-acetylmannosamine-6-phosphate (ManNAc-6-P) to N-acetylglucosamine-6-phosphate (GlcNAc-6-P). The protein is Putative N-acetylmannosamine-6-phosphate 2-epimerase of Borreliella burgdorferi (strain ZS7) (Borrelia burgdorferi).